Consider the following 237-residue polypeptide: LexA repressor (237 aa).

Positions 26 to 46 form a DNA-binding region, H-T-H motif; sequence FDEMKDALGLKSKSGIHRLIT. Catalysis depends on for autocatalytic cleavage activity residues Ser-158 and Lys-196.

The protein belongs to the peptidase S24 family. In terms of assembly, homodimer.

It carries out the reaction Hydrolysis of Ala-|-Gly bond in repressor LexA.. In terms of biological role, represses a number of genes involved in the response to DNA damage (SOS response), including recA and lexA. In the presence of single-stranded DNA, RecA interacts with LexA causing an autocatalytic cleavage which disrupts the DNA-binding part of LexA, leading to derepression of the SOS regulon and eventually DNA repair. In Rhodospirillum centenum (strain ATCC 51521 / SW), this protein is LexA repressor.